A 96-amino-acid polypeptide reads, in one-letter code: Co-chaperonin GroES (96 aa).

It belongs to the GroES chaperonin family. As to quaternary structure, heptamer of 7 subunits arranged in a ring. Interacts with the chaperonin GroEL.

Its subcellular location is the cytoplasm. In terms of biological role, together with the chaperonin GroEL, plays an essential role in assisting protein folding. The GroEL-GroES system forms a nano-cage that allows encapsulation of the non-native substrate proteins and provides a physical environment optimized to promote and accelerate protein folding. GroES binds to the apical surface of the GroEL ring, thereby capping the opening of the GroEL channel. This Caulobacter vibrioides (strain ATCC 19089 / CIP 103742 / CB 15) (Caulobacter crescentus) protein is Co-chaperonin GroES.